A 1235-amino-acid polypeptide reads, in one-letter code: ATP-dependent helicase/nuclease subunit A (1235 aa).

Positions 4-470 constitute a UvrD-like helicase ATP-binding domain; that stretch reads REYTLSQKQA…IILAENFRSM (467 aa). 25-32 serves as a coordination point for ATP; sequence ASAGSGKT. Residues 501-795 form the UvrD-like helicase C-terminal domain; it reads QFGAKYYPDE…KLMTIHGSKG (295 aa).

The protein belongs to the helicase family. AddA subfamily. In terms of assembly, heterodimer of AddA and AddB/RexB. Mg(2+) is required as a cofactor.

The catalysed reaction is Couples ATP hydrolysis with the unwinding of duplex DNA by translocating in the 3'-5' direction.. It catalyses the reaction ATP + H2O = ADP + phosphate + H(+). In terms of biological role, the heterodimer acts as both an ATP-dependent DNA helicase and an ATP-dependent, dual-direction single-stranded exonuclease. Recognizes the chi site generating a DNA molecule suitable for the initiation of homologous recombination. The AddA nuclease domain is required for chi fragment generation; this subunit has the helicase and 3' -&gt; 5' nuclease activities. This chain is ATP-dependent helicase/nuclease subunit A, found in Pediococcus pentosaceus (strain ATCC 25745 / CCUG 21536 / LMG 10740 / 183-1w).